We begin with the raw amino-acid sequence, 283 residues long: MGLGLRGWGRPLLTVATALMLPVKPPAGSWGAQIIGGHEVTPHSRPYMASVRFGGQHHCGGFLLRARWVVSAAHCFSHRDLRTGLVVLGAHVLSTAEPTQQVFGIDALTTHPDYHPMTHANDICLLRLNGSAVLGPAVGLLRPPGRRARPPTAGTRCRVAGWGFVSDFEELPPGLMEAKVRVLDPDVCNSSWKGHLTLTMLCTRSGDSHRRGFCSADSGGPLVCRNRAHGLVSFSGLWCGDPKTPDVYTQVSAFVAWIWDVVRRSSPQPGPLPGTTRPPGEAA.

Residues 1-31 form the signal peptide; that stretch reads MGLGLRGWGRPLLTVATALMLPVKPPAGSWG. In terms of domain architecture, Peptidase S1 spans 34–263; that stretch reads IIGGHEVTPH…FVAWIWDVVR (230 aa). Cysteines 59 and 75 form a disulfide. Residues His74 and Asp122 each act as charge relay system in the active site. N-linked (GlcNAc...) asparagine glycans are attached at residues Asn129 and Asn189. Cystine bridges form between Cys157–Cys224, Cys188–Cys202, and Cys214–Cys239. The Charge relay system role is filled by Ser218.

The protein belongs to the peptidase S1 family. After cleavage of the signal peptide, the N-terminus is probably further processed by CTSC. Processing by CTSC is probably required for accumulation in cytoplasmic granules; in the absence of CTSC the protein does not accumulate. Post-translationally, N-glycosylated. Detected in peripheral blood neutrophil granulocytes, but not in other types of leukocytes. Detected in neutrophils and neutrophil precursors in bone marrow (at protein level). Detected in myeloblasts and promyelocytes in bone marrow.

Its subcellular location is the cytoplasmic granule lumen. It localises to the secreted. Its activity is regulated as follows. Inhibited by SERPINA1, SERPINC1 and SERPING1. In terms of biological role, serine protease that cleaves preferentially after Arg residues. Can also cleave after citrulline (deimidated arginine) and methylarginine residues. In Homo sapiens (Human), this protein is Serine protease 57 (PRSS57).